A 375-amino-acid chain; its full sequence is tRNA-specific 2-thiouridylase MnmA (375 aa).

ATP is bound by residues 12-19 (GMSGGVDS) and M38. Residues 98–100 (NPD) form an interaction with target base in tRNA region. C103 functions as the Nucleophile in the catalytic mechanism. A disulfide bond links C103 and C200. G127 provides a ligand contact to ATP. The interval 150–152 (KDQ) is interaction with tRNA. The Cysteine persulfide intermediate role is filled by C200. The segment at 312 to 313 (RY) is interaction with tRNA.

The protein belongs to the MnmA/TRMU family.

The protein localises to the cytoplasm. It catalyses the reaction S-sulfanyl-L-cysteinyl-[protein] + uridine(34) in tRNA + AH2 + ATP = 2-thiouridine(34) in tRNA + L-cysteinyl-[protein] + A + AMP + diphosphate + H(+). Catalyzes the 2-thiolation of uridine at the wobble position (U34) of tRNA, leading to the formation of s(2)U34. The sequence is that of tRNA-specific 2-thiouridylase MnmA from Lactobacillus gasseri (strain ATCC 33323 / DSM 20243 / BCRC 14619 / CIP 102991 / JCM 1131 / KCTC 3163 / NCIMB 11718 / NCTC 13722 / AM63).